A 207-amino-acid polypeptide reads, in one-letter code: Ribonuclease HII (207 aa).

The region spanning 20–207 (QLFAGVDEVG…KPVKRVLGIE (188 aa)) is the RNase H type-2 domain. A divalent metal cation is bound by residues D26, E27, and D118.

It belongs to the RNase HII family. It depends on Mn(2+) as a cofactor. Requires Mg(2+) as cofactor.

Its subcellular location is the cytoplasm. The enzyme catalyses Endonucleolytic cleavage to 5'-phosphomonoester.. In terms of biological role, endonuclease that specifically degrades the RNA of RNA-DNA hybrids. This Aliivibrio fischeri (strain MJ11) (Vibrio fischeri) protein is Ribonuclease HII.